A 105-amino-acid chain; its full sequence is uncharacterized protein (105 aa).

This is an uncharacterized protein from Bacillus phage SPbeta (Bacillus phage SPBc2).